The primary structure comprises 163 residues: Crossover junction endodeoxyribonuclease RuvC (163 aa).

Active-site residues include D7, E67, and D140. 3 residues coordinate Mg(2+): D7, E67, and D140.

It belongs to the RuvC family. Homodimer which binds Holliday junction (HJ) DNA. The HJ becomes 2-fold symmetrical on binding to RuvC with unstacked arms; it has a different conformation from HJ DNA in complex with RuvA. In the full resolvosome a probable DNA-RuvA(4)-RuvB(12)-RuvC(2) complex forms which resolves the HJ. Mg(2+) serves as cofactor.

The protein resides in the cytoplasm. It catalyses the reaction Endonucleolytic cleavage at a junction such as a reciprocal single-stranded crossover between two homologous DNA duplexes (Holliday junction).. Functionally, the RuvA-RuvB-RuvC complex processes Holliday junction (HJ) DNA during genetic recombination and DNA repair. Endonuclease that resolves HJ intermediates. Cleaves cruciform DNA by making single-stranded nicks across the HJ at symmetrical positions within the homologous arms, yielding a 5'-phosphate and a 3'-hydroxyl group; requires a central core of homology in the junction. The consensus cleavage sequence is 5'-(A/T)TT(C/G)-3'. Cleavage occurs on the 3'-side of the TT dinucleotide at the point of strand exchange. HJ branch migration catalyzed by RuvA-RuvB allows RuvC to scan DNA until it finds its consensus sequence, where it cleaves and resolves the cruciform DNA. This is Crossover junction endodeoxyribonuclease RuvC from Petrotoga mobilis (strain DSM 10674 / SJ95).